The chain runs to 118 residues: CLAVATA3/ESR (CLE)-related protein 12 (118 aa).

The first 35 residues, 1–35 (MLRISSSSSMALKFSQILFIVLWLSLFFLLLHHLY), serve as a signal peptide directing secretion. Basic and acidic residues-rich tracts occupy residues 75-91 (TPFH…RSGE) and 98-108 (IDPRYGVEKRR). Residues 75–118 (TPFHSRDNSRHNHRSGEQYDGDEIDPRYGVEKRRVPSGPNPLHH) form a disordered region. Proline 110 and proline 113 each carry hydroxyproline. A glycan (O-linked (Ara...) hydroxyproline) is linked at proline 113.

The protein belongs to the CLV3/ESR signal peptide family. The O-glycosylation (arabinosylation) of the hydroxyproline Pro-113 enhances binding affinity of the CLE12p peptide for its receptor. As to expression, mostly expressed in seedlings, roots, flowers, stems and apex, and, to a lower extent, in leaves and siliques.

It localises to the secreted. Its subcellular location is the extracellular space. Its function is as follows. Extracellular signal peptide that regulates cell fate. Represses root apical meristem maintenance. This Arabidopsis thaliana (Mouse-ear cress) protein is CLAVATA3/ESR (CLE)-related protein 12.